The primary structure comprises 347 residues: Haptoglobin (347 aa).

The signal sequence occupies residues 1 to 18 (MRALGAVVALLLCGQLFA). The region spanning 31–88 (DSCPKPPEIPKGYVEHMVRYHCQTYYKLRTAGDGVYTLDSNKQWTNKVTGEKLPECEA) is the Sushi domain. 2 disulfide bridges follow: Cys-52-Cys-86 and Cys-90-Cys-207. Positions 103–345 (IMGGSLDAKG…ILDWIQTTIA (243 aa)) constitute a Peptidase S1 domain. N-linked (GlcNAc...) asparagine glycosylation is found at Asn-125, Asn-151, Asn-183, and Asn-232. 2 cysteine pairs are disulfide-bonded: Cys-250–Cys-281 and Cys-292–Cys-322. The interaction with CD163 stretch occupies residues 259–264 (VPEKKT).

It belongs to the peptidase S1 family. Tetramer of two alpha and two beta chains; disulfide-linked. The hemoglobin/haptoglobin complex is composed of a haptoglobin dimer bound to two hemoglobin alpha-beta dimers. Interacts with CD163. Interacts with ERGIC3. Expressed by the liver and secreted in plasma.

The protein localises to the secreted. Its function is as follows. As a result of hemolysis, hemoglobin is found to accumulate in the kidney and is secreted in the urine. Haptoglobin captures, and combines with free plasma hemoglobin to allow hepatic recycling of heme iron and to prevent kidney damage. Haptoglobin also acts as an antioxidant, has antibacterial activity and plays a role in modulating many aspects of the acute phase response. Hemoglobin/haptoglobin complexes are rapidly cleared by the macrophage CD163 scavenger receptor expressed on the surface of liver Kupfer cells through an endocytic lysosomal degradation pathway. This is Haptoglobin (HP) from Sus scrofa (Pig).